Reading from the N-terminus, the 337-residue chain is Glucokinase (337 aa).

Position 11 to 16 (11 to 16 (ADIGGT)) interacts with ATP.

The protein belongs to the bacterial glucokinase family.

It is found in the cytoplasm. It catalyses the reaction D-glucose + ATP = D-glucose 6-phosphate + ADP + H(+). The sequence is that of Glucokinase from Xylella fastidiosa (strain M12).